We begin with the raw amino-acid sequence, 399 residues long: Probable aspartate/prephenate aminotransferase (399 aa).

Residues Gly39, Trp125, and Asn175 each coordinate L-aspartate. Lys239 is subject to N6-(pyridoxal phosphate)lysine. An L-aspartate-binding site is contributed by Arg375.

The protein belongs to the class-I pyridoxal-phosphate-dependent aminotransferase family. As to quaternary structure, homodimer. The cofactor is pyridoxal 5'-phosphate.

It is found in the cytoplasm. It carries out the reaction L-aspartate + 2-oxoglutarate = oxaloacetate + L-glutamate. The enzyme catalyses L-arogenate + 2-oxoglutarate = prephenate + L-glutamate. Catalyzes the reversible conversion of aspartate and 2-oxoglutarate to glutamate and oxaloacetate. Can also transaminate prephenate in the presence of glutamate. The chain is Probable aspartate/prephenate aminotransferase (aatA) from Rickettsia prowazekii (strain Madrid E).